The primary structure comprises 107 residues: U-scoloptoxin(19)-Sm1a (107 aa).

An N-terminal signal peptide occupies residues 1–20 (MRFLVSVAFLLTVSSLLVSG).

The protein belongs to the scoloptoxin-19 family. Post-translationally, contains 6 disulfide bonds. In terms of tissue distribution, expressed by the venom gland.

Its subcellular location is the secreted. In Scolopendra morsitans (Tanzanian blue ringleg centipede), this protein is U-scoloptoxin(19)-Sm1a.